The chain runs to 354 residues: Guanine nucleotide-binding protein G(i) subunit alpha-3 (354 aa).

Gly-2 carries the N-myristoyl glycine lipid modification. Residue Cys-3 is the site of S-palmitoyl cysteine attachment. The region spanning 32–354 (KEVKLLLLGA…KNNLKECGLY (323 aa)) is the G-alpha domain. A G1 motif region spans residues 35–48 (KLLLLGAGESGKST). GTP-binding residues include Gly-42, Glu-43, Ser-44, Gly-45, Lys-46, Ser-47, Thr-48, Asp-150, Ser-151, Leu-175, Arg-176, Thr-177, Arg-178, Val-179, Lys-180, Thr-181, Val-201, Gly-203, Asn-269, Lys-270, Asp-272, Leu-273, Cys-325, Ala-326, and Thr-327. Residue Ser-47 participates in Mg(2+) binding. Residues 173–181 (DVLRTRVKT) form a G2 motif region. Thr-181 contacts Mg(2+). The segment at 196–205 (FKMFDVGGQR) is G3 motif. Positions 265-272 (ILFLNKKD) are G4 motif. The segment at 324 to 329 (TCATDT) is G5 motif.

This sequence belongs to the G-alpha family. G(i/o/t/z) subfamily. As to quaternary structure, heterotrimeric G proteins are composed of 3 units; alpha, beta and gamma. The alpha subunit contains the guanine nucleotide binding site. GTP binding causes dissociation of the heterotrimer, liberating the individual subunits so that they can interact with downstream effector proteins. Forms a complex with CCDC88A/GIV and EGFR which leads to enhanced EGFR signaling and triggering of cell migration; ligand stimulation is required for recruitment of GNAI3 to the complex. Interacts (inactive GDP-bound form) with CCDC88A/GIV (via GBA motif); the interaction leads to activation of GNAI3. Interacts (inactive GDP-bound form) with CCDC88C/DAPLE (via GBA motif); the interaction leads to activation of GNAI3. Interacts (inactive GDP-bound form) with NUCB1 (via GBA motif) and NUCB2 (via GBA motif); the interaction leads to activation of GNAI3. Interacts (inactive GDP-bound form) with PLCD4 (via GBA motif); the interaction leads to activation of GNAI3. Interacts with INSR; the interaction is probably mediated by CCDC88A/GIV. Interacts with GPSM1. Interacts (GDP-bound form) with GPSM2 (via GoLoco domains). Does not interact with RGS2. Interacts with RGS8 and RGS10; this strongly enhances the intrinsic GTPase activity. Interacts with RGS16; this strongly enhances the intrinsic GTPase activity. Interacts with RGS12. Interacts (via active GTP- or inactive GDP-bound form) with RGS14. Interacts (via active GTP-bound form) with TRPC5 (via ANK repeats) in a homotetrameric ion channel; the interaction is direct and activates the channel activity. As to expression, ubiquitously expressed.

It is found in the cytoplasm. The protein localises to the cell membrane. Its subcellular location is the cytoskeleton. The protein resides in the microtubule organizing center. It localises to the centrosome. Functionally, heterotrimeric guanine nucleotide-binding proteins (G proteins) function as transducers downstream of G protein-coupled receptors (GPCRs) in numerous signaling cascades. The alpha chain contains the guanine nucleotide binding site and alternates between an active, GTP-bound state and an inactive, GDP-bound state. Signaling by an activated GPCR promotes GDP release and GTP binding. The alpha subunit has a low GTPase activity that converts bound GTP to GDP, thereby terminating the signal. Both GDP release and GTP hydrolysis are modulated by numerous regulatory proteins. Signaling is mediated via effector proteins, such as adenylate cyclase. Inhibits adenylate cyclase activity, leading to decreased intracellular cAMP levels. Stimulates the activity of receptor-regulated K(+) channels. The active GTP-bound form prevents the association of RGS14 with centrosomes and is required for the translocation of RGS14 from the cytoplasm to the plasma membrane. May play a role in cell division. The active GTP-bound form activates the calcium permeant TRPC5 ion channels. In Cavia porcellus (Guinea pig), this protein is Guanine nucleotide-binding protein G(i) subunit alpha-3 (GNAI3).